The following is a 420-amino-acid chain: Glucose-1-phosphate adenylyltransferase (420 aa).

Alpha-D-glucose 1-phosphate is bound by residues Tyr107, Gly173, 188–189, and Ser206; that span reads EK.

Belongs to the bacterial/plant glucose-1-phosphate adenylyltransferase family. Homotetramer.

It carries out the reaction alpha-D-glucose 1-phosphate + ATP + H(+) = ADP-alpha-D-glucose + diphosphate. The protein operates within glycan biosynthesis; glycogen biosynthesis. In terms of biological role, involved in the biosynthesis of ADP-glucose, a building block required for the elongation reactions to produce glycogen. Catalyzes the reaction between ATP and alpha-D-glucose 1-phosphate (G1P) to produce pyrophosphate and ADP-Glc. The sequence is that of Glucose-1-phosphate adenylyltransferase from Shewanella frigidimarina (strain NCIMB 400).